The primary structure comprises 2227 residues: MNMSRQGIFQTVGSGLDHILSLADIEEEQMIQSVDRTAVTGASYFTSVDQSSVHTAEVGSHQVEPLRTSVDKPGSKKTQGEKFFLIHSADWLTTHALFHEVAKLDVVKLLYNEQFAVQGLLRYHTYARFGIEIQVQINPTPFQQGGLICAMVPGDQSYGSIASLTVYPHGLLNCNINNVVRIKVPFIYTRGAYHFKDPQYPVWELTIRVWSELNIGTGTSAYTSLNVLARFTDLELHGLTPLSTQMMRNEFRVSTTENVVNLSNYEDARAKMSFALDQEDWKSDPSQGGGIKITHFTTWTSIPTLAAQFPFNASDSVGQQIKVIPVDPYFFQMTNTNPDQKCITALASICQMFCFWRGDLVFDFQVFPTKYHSGRLLFCFVPGNELIDVSGITLKQATTAPCAVMDITGVQSTLRFRVPWISDTPYRVNRYTKSAHQKGEYTAIGKLIVYCYNRLTSPSNVASHVRVNVYLSAINLECFAPLYHAMDVTTQVGDDSGGFSTTVSTEQNVPDPQVGITTMKDLKGKANRGKMDVSGVQAPVGAITTIEDPVLAKKVPETFPELKPGESRHTSDHMSIYKFMGRSHFLCTFTFNSNNKEYTFPITLSSTSNPPHGLPSTLRWFFNLFQLYRGPLDLTIIITGATDVDGMAWFTPVGLAVDTPWVEKESALSIDYKTALGAVRFNTRRTGNIQIRLPWYSYLYAVSGALDGLGDKTDSTFGLVSIQIANYNHSDEYLSFSCYLSVTEQSEFYFPRAPLNSNAMLSTESMMSRIAAGDLESSVDDPRSEEDKRFESHIECRKPYKELRLEVGKQRLKYAQEELSNEVLPPPRKMKGLFSQAKISLFYTEEHEIMKFSWRGVTADTRALRRFGFSLAAGRSVWTLEMDAGVLTGRLIRLNDEKWTEMKDDKIVSLIEKFTSNKYWSKVNFPHGMLDLEEIAANSKDFPNMSETDLCFLLHWLNPKKINLADRMLGLSGVQEIKEQGVGLIAECRTFLDSIAGTLKSMMFGFHHSVTVEIINTVLCFVKSGILLYVIQQLNQDEHSHIIGLLRVMNYADIGCSVISCGKVFSKMLETVFNWQMDSRMMELRTQSFSNWLRDICSGITIFKNFKDAIYWLYTKLKDFYEVNYGKKKDILNILKDNQQKIEKAIEEADEFCILQIQDVEKFEQYQKGVDLIQKLRTVHSMAQVDPNLMVHLSPLRDCIARVHQKLKNLGSINQAMVTRCEPVVCYLYGKRGGGKSLTSIALATKICKHYGVEPEKNIYTKPVASDYWDGYSGQLVCIIDDIGQNTTDEDWSDFCQLVSGCPMRLNMASLEEKGRHFSSPFIIATSNWSNPSPKTVYVKEAIDRRLHFKVEVKPASFFKNPHNDMLNVNLAKTNDAIKDMSCVDLIMDGHNVSLMDLLSSLVMTVEIRKQNMTEFMELWSQGISDDDNDSAVAEFFQSFPSGEPSNSKLSGFFQSVTNHKWVAVGAAVGILGVLVGGWFVYKHFSRKEEEPIPAEGVYHGVTKPKQVIKLDADPVESQSTLEIAGLVRKNLVQFGVGEKNGCVRWVMNALGVKDDWLLVPSHAYKFEKDYEMMEFYFNRGGTYYSISAGNVVIQSLDVGFQDVVLMKVPTIPKFRDITQHFIKKGDVPRALNRLATLVTTVNGTPMLISEGPLKMEEKATYVHKKNDGTTVDLTVDQAWRGKGEGLPGMCGGALVSSNQSIQNAILGIHVAGGNSILVAKLVTQEMFQNIDKKIESQRIMKVEFTQCSMNVVSKTLFRKSPIYHHIDKTMINFPAAMPFSKAEIDPMAVMLSKYSLPIVEEPEDYKEASIFYQNKIVGKTQLVDDFLDLDMAITGAPGIDAINMDSSPGFPYVQEKLTKRDLIWLDENGLLLGVHPRLAQRILFNTVMMENCSDLDVVFTTCPKDELRPLEKVLESKTRAIDACPLDYSILCRMYWGPAISYFHLNPGFHTGVAIGIDPDRQWDELFKTMIRFGDVGLDLDFSAFDASLSPFMIREAGRIMSELSGTPSHFGTALINTIIYSKHLLYNCCYHVCGSMPSGSPCTALLNSIINNVNLYYVFSKIFGKSPVFFCQALKILCYGDDVLIVFSRDVQIDNLDLIGQKIVDEFKKLGMTATSADKNVPQLKPVSELTFLKRSFNLVEDRIRPAISEKTIWSLIAWQRSNAEFEQNLENAQWFAFMHGYEFYQKFYYFVQSCLEKEMIEYRLKSYDWWRMRFYDQCFICDLS.

2 consecutive short sequence motifs ((L)YPX(n)L motif) follow at residues 167-171 (YPHGL) and 200-205 (YPVWEL). The tract at residues 766 to 836 (MMSRIAAGDL…PRKMKGLFSQ (71 aa)) is involved in P1-2A pentamerization. The helical transmembrane segment at 1011–1031 (TVEIINTVLCFVKSGILLYVI) threads the bilayer. The segment at 1043–1070 (IGLLRVMNYADIGCSVISCGKVFSKMLE) is membrane-penetrating ability. Residues 1204 to 1366 (HQKLKNLGSI…SFFKNPHNDM (163 aa)) enclose the SF3 helicase domain. An ATP-binding site is contributed by 1230 to 1237 (GKRGGGKS). Residues 1462 to 1482 (WVAVGAAVGILGVLVGGWFVY) traverse the membrane as a helical segment. At Y1499 the chain carries O-(5'-phospho-RNA)-tyrosine. The region spanning 1514-1728 (DPVESQSTLE…VAKLVTQEMF (215 aa)) is the Peptidase C3 domain. Catalysis depends on for protease 3C activity residues H1563, D1603, and C1691. Residues 1976-2097 (DVGLDLDFSA…VFSRDVQIDN (122 aa)) form the RdRp catalytic domain.

The protein belongs to the picornaviridae polyprotein family. As to quaternary structure, homodimer. Homomultimer; probably interacts with membranes in a multimeric form. Seems to assemble into amyloid-like fibers. Interacts with host ACBD3. In terms of assembly, homodimer. Monomer. Interacts with protein 3CD. As to quaternary structure, interacts with protein 3AB. Interacts with human MAVS. In terms of assembly, homodimer; disulfide-linked. As to quaternary structure, homopentamer. Homooligomer. Interacts with capsid protein VP2. Interacts with capsid protein VP3. In terms of assembly, interacts with capsid protein VP1. Interacts with capsid protein VP3. As to quaternary structure, interacts with capsid protein VP1. Interacts with capsid protein VP2. Specific enzymatic cleavages by viral protease in vivo yield a variety of precursors and mature proteins. Polyprotein processing intermediates are produced, such as P1-2A which is a functional precursor of the structural proteins, VP0 which is a VP4-VP2 precursor, VP1-2A precursor, 3ABC precursor which is a stable and catalytically active precursor of 3A, 3B and 3C proteins, 3AB and 3CD precursors. The assembly signal 2A is removed from VP1-2A by a host protease, possibly host Cathepsin L. This cleavage occurs over a region of 3 amino-acids probably generating VP1 proteins with heterogeneous C-termini. Post-translationally, during virion maturation, immature virions are rendered infectious following cleavage of VP0 into VP4 and VP2. This maturation seems to be an autocatalytic event triggered by the presence of RNA in the capsid and is followed by a conformational change of the particle. In terms of processing, the assembly signal 2A is removed from VP1-2A by a host protease, possibly host Cathepsin L in naked virions. This cleavage does not occur in enveloped virions. This cleavage occurs over a region of 3 amino-acids probably generating VP1 proteins with heterogeneous C-termini. VPg is uridylylated prior to priming replication into VPg-pUpU. Post-translationally, unlike other picornaviruses, does not seem to be myristoylated.

Its subcellular location is the virion. The protein resides in the host endosome. It is found in the host multivesicular body. The protein localises to the host membrane. It localises to the host mitochondrion outer membrane. Its subcellular location is the host cytoplasm. The protein resides in the host cytoplasmic vesicle membrane. The catalysed reaction is RNA(n) + a ribonucleoside 5'-triphosphate = RNA(n+1) + diphosphate. The enzyme catalyses a ribonucleoside 5'-triphosphate + H2O = a ribonucleoside 5'-diphosphate + phosphate + H(+). It carries out the reaction Selective cleavage of Gln-|-Gly bond in the poliovirus polyprotein. In other picornavirus reactions Glu may be substituted for Gln, and Ser or Thr for Gly.. In terms of biological role, capsid proteins VP1, VP2, and VP3 form a closed capsid enclosing the viral positive strand RNA genome. All these proteins contain a beta-sheet structure called beta-barrel jelly roll. Together they form an icosahedral capsid (T=3) composed of 60 copies of each VP1, VP2, and VP3, with a diameter of approximately 300 Angstroms. VP1 is situated at the 12 fivefold axes, whereas VP2 and VP3 are located at the quasi-sixfold axes. The naked capsid interacts with the host receptor HAVCR1 to provide virion attachment to and probably entry into the target cell. Its function is as follows. VP0 precursor is a component of the immature procapsids. Plays a role in the assembly of the 12 pentamers into an icosahedral structure. Has not been detected in mature virions, supposedly owing to its small size. Functionally, precursor component of immature procapsids that corresponds to an extended form of the structural protein VP1. After maturation, possibly by the host Cathepsin L, the assembly signal 2A is cleaved to give rise to the mature VP1 protein. In terms of biological role, functions as a viroporin. Affects membrane integrity and causes an increase in membrane permeability. Involved in host intracellular membrane rearrangements probably to give rise to the viral factories. Does not disrupt calcium homeostasis or glycoprotein trafficking. Antagonizes the innate immune response of the host by suppressing IFN-beta synthesis, which it achieves by interfering with the RIG-I/IFIH1 pathway. Its function is as follows. Affects membrane integrity and causes an increase in membrane permeability. Associates with and induces structural rearrangements of intracellular membranes. Displays RNA-binding activity. Functionally, the precursor 3ABC is targeted to the mitochondrial membrane where protease 3C activity cleaves and inhibits the host antiviral protein MAVS, thereby disrupting activation of IRF3 through the IFIH1/MDA5 pathway. In vivo, the protease activity of 3ABC precursor is more efficient in cleaving the 2BC precursor than that of protein 3C. The 3ABC precursor may therefore play a role in the proteolytic processing of the polyprotein. In terms of biological role, interacts with the 3CD precursor and with RNA structures found at both the 5'- and 3'-termini of the viral genome. Since the 3AB precursor contains the hydrophobic domain 3A, it probably anchors the whole viral replicase complex to intracellular membranes on which viral RNA synthesis occurs. Its function is as follows. May serve as membrane anchor to the 3AB and 3ABC precursors via its hydrophobic domain. May interact with RNA. Acts as a primer for viral RNA replication and remains covalently bound to viral genomic RNA. VPg is uridylylated prior to priming replication into VPg-pUpU. The VPg-pUpU is then used as primer on the genomic RNA poly(A) by the RNA-dependent RNA polymerase to replicate the viral genome. Functionally, cysteine protease that generates mature viral proteins from the precursor polyprotein. In addition to its proteolytic activity, it binds to viral RNA, and thus influences viral genome replication. RNA and substrate bind cooperatively to the protease. Cleaves IKBKG/NEMO to impair innate immune signaling. Cleaves host PABPC1 which may participate in the switch of viral translation to RNA synthesis. In terms of biological role, interacts with the 3AB precursor and with RNA structures found at both the 5'- and 3'-termini of the viral genome. Disrupts TLR3 signaling by degrading the host adapter protein TICAM1/TRIF. Its function is as follows. RNA-directed RNA polymerase 3D-POL replicates genomic and antigenomic RNA by recognizing replications specific signals. This is Genome polyprotein from Human hepatitis A virus genotype IB (isolate HM175) (HHAV).